Consider the following 290-residue polypeptide: Undecaprenyl-diphosphatase (290 aa).

8 helical membrane-spanning segments follow: residues 1 to 21 (MFLLELIKGIILGIVEGLTEF), 48 to 68 (SAFTFKVVIQLGSVFAAAWVF), 101 to 121 (IHVLVGMVPAGILGFLFDDLI), 125 to 145 (LFSVPTVLIGLFIGAIYMIIA), 161 to 181 (INYFQAFVIGISQAIAMWPGF), 202 to 222 (SDFTFIMSVPIMLAASGLSLL), 231 to 251 (AHIPFYILGFLAAFIVGLIAI), and 266 to 286 (FAIYRIVLVIFIAILYFGFGI).

The protein belongs to the UppP family.

It localises to the cell membrane. The enzyme catalyses di-trans,octa-cis-undecaprenyl diphosphate + H2O = di-trans,octa-cis-undecaprenyl phosphate + phosphate + H(+). Functionally, catalyzes the dephosphorylation of undecaprenyl diphosphate (UPP). Confers resistance to bacitracin. The protein is Undecaprenyl-diphosphatase of Staphylococcus epidermidis (strain ATCC 35984 / DSM 28319 / BCRC 17069 / CCUG 31568 / BM 3577 / RP62A).